A 339-amino-acid polypeptide reads, in one-letter code: Ketol-acid reductoisomerase (NADP(+)) (339 aa).

Positions 1-182 (MRVYYDCDVN…GGGRSGIMKT (182 aa)) constitute a KARI N-terminal Rossmann domain. NADP(+) contacts are provided by residues 24–27 (YGAQ), Ser-51, Thr-53, and 83–86 (DELQ). The active site involves His-108. NADP(+) is bound at residue Gly-134. One can recognise a KARI C-terminal knotted domain in the interval 183–328 (TFREECETDL…DKIRSMMALT (146 aa)). Asp-191, Glu-195, Glu-227, and Glu-231 together coordinate Mg(2+). Residue Ser-252 coordinates substrate.

The protein belongs to the ketol-acid reductoisomerase family. Requires Mg(2+) as cofactor.

It carries out the reaction (2R)-2,3-dihydroxy-3-methylbutanoate + NADP(+) = (2S)-2-acetolactate + NADPH + H(+). The catalysed reaction is (2R,3R)-2,3-dihydroxy-3-methylpentanoate + NADP(+) = (S)-2-ethyl-2-hydroxy-3-oxobutanoate + NADPH + H(+). The protein operates within amino-acid biosynthesis; L-isoleucine biosynthesis; L-isoleucine from 2-oxobutanoate: step 2/4. Its pathway is amino-acid biosynthesis; L-valine biosynthesis; L-valine from pyruvate: step 2/4. In terms of biological role, involved in the biosynthesis of branched-chain amino acids (BCAA). Catalyzes an alkyl-migration followed by a ketol-acid reduction of (S)-2-acetolactate (S2AL) to yield (R)-2,3-dihydroxy-isovalerate. In the isomerase reaction, S2AL is rearranged via a Mg-dependent methyl migration to produce 3-hydroxy-3-methyl-2-ketobutyrate (HMKB). In the reductase reaction, this 2-ketoacid undergoes a metal-dependent reduction by NADPH to yield (R)-2,3-dihydroxy-isovalerate. This is Ketol-acid reductoisomerase (NADP(+)) from Bartonella bacilliformis (strain ATCC 35685 / KC583 / Herrer 020/F12,63).